We begin with the raw amino-acid sequence, 111 residues long: Cytochrome c (111 aa).

Ala-1 is subject to N-acetylalanine. The heme c site is built by Cys-22, Cys-25, and His-26. Lys-80 is subject to N6,N6,N6-trimethyllysine. Residue Met-88 participates in heme c binding. Residue Lys-94 is modified to N6,N6,N6-trimethyllysine.

This sequence belongs to the cytochrome c family. Binds 1 heme c group covalently per subunit.

Its subcellular location is the mitochondrion intermembrane space. In terms of biological role, electron carrier protein. The oxidized form of the cytochrome c heme group can accept an electron from the heme group of the cytochrome c1 subunit of cytochrome reductase. Cytochrome c then transfers this electron to the cytochrome oxidase complex, the final protein carrier in the mitochondrial electron-transport chain. This is Cytochrome c from Sesamum indicum (Oriental sesame).